A 1512-amino-acid polypeptide reads, in one-letter code: ATP-dependent permease YOR1 (1512 aa).

Positions 1-68 (MSPLLPTHWG…KGMKETEDGG (68 aa)) are disordered. Residues 13–29 (APQNEPTLPSPSHSVST) are compositionally biased toward polar residues. The span at 31 to 65 (VGDEEKLRRSEGSDGEDRINLDSNKYDVKGMKETE) shows a compositional bias: basic and acidic residues. Helical transmembrane passes span 229-249 (ASLA…AGFI), 288-308 (GPGI…SLGM), 363-385 (FAAG…IIIL), 475-495 (GMTA…FITY), and 507-527 (IFTV…WPMT). The ABC transmembrane type-1 1 domain occupies 246-533 (AGFIKVFGDT…WPMTLSSTAD (288 aa)). Residues 594–656 (VLNGGKPGGP…SAPGIDEEIS (63 aa)) form a disordered region. The segment covering 619-643 (AEEIQAETAAGQPGAGEASAEGQGQ) has biased composition (low complexity). Residues 651-871 (IDEEISEKKE…NGAFAKLIKE (221 aa)) form the ABC transporter 1 domain. 683–690 (GAIGSGKS) provides a ligand contact to ATP. A run of 4 helical transmembrane segments spans residues 937-957 (GVFM…FYVI), 974-994 (NGFY…ALFF), 1067-1087 (VILL…VSLL), and 1167-1187 (FLGS…SSVS). Residues 943–1217 (LLFFCIVVAQ…LVRQIAEVEN (275 aa)) form the ABC transmembrane type-1 2 domain. The ABC transporter 2 domain maps to 1255–1496 (IEFKDVRMRY…GGIFTEMCSK (242 aa)). Position 1289–1296 (1289–1296 (GRTGAGKS)) interacts with ATP.

This sequence belongs to the ABC transporter superfamily. ABCC family. Conjugate transporter (TC 3.A.1.208) subfamily.

Its subcellular location is the extracellular vesicle membrane. It is found in the secreted. In terms of biological role, transmembrane transporter. May play a role in the packaging or formation of extracellular vesicles (EVs), and in the export of virulence factors from EVs. Required for efficient non-lytic exocytosis from host macrophages, the process by which the yeast escapes host macrophages with both host cell and pathogen remaining viable. This Cryptococcus neoformans var. grubii serotype A (strain H99 / ATCC 208821 / CBS 10515 / FGSC 9487) (Filobasidiella neoformans var. grubii) protein is ATP-dependent permease YOR1.